Consider the following 277-residue polypeptide: Alpha carbonic anhydrase 3 (277 aa).

The signal sequence occupies residues 1–19 (MKTIILFVTFLALSSSSLA). The 236-residue stretch at 24–259 (TEFHYKPGEI…LNGRLVYLNE (236 aa)) folds into the Alpha-carbonic anhydrase domain. A disulfide bridge connects residues Cys49 and Cys209. Asn70 and Asn107 each carry an N-linked (GlcNAc...) asparagine glycan. Positions 117, 119, and 136 each coordinate Zn(2+). 205–206 (TT) provides a ligand contact to substrate. The disordered stretch occupies residues 257-277 (LNEQSSPSPTPRLRIPRVGPV).

This sequence belongs to the alpha-class carbonic anhydrase family. Zn(2+) serves as cofactor. In terms of processing, N-glycosylated. As to expression, expressed in flowers and siliques.

It localises to the plastid. The protein localises to the chloroplast stroma. It carries out the reaction hydrogencarbonate + H(+) = CO2 + H2O. In terms of biological role, reversible hydration of carbon dioxide. This Arabidopsis thaliana (Mouse-ear cress) protein is Alpha carbonic anhydrase 3 (ACA3).